Consider the following 98-residue polypeptide: NADH-ubiquinone oxidoreductase chain 4L (98 aa).

Helical transmembrane passes span 1–21 (MPFIYINTALAYSMSLLGLLI), 29–49 (SLLCLEGMMLSLFIMMTTMTL), and 61–81 (IILLVFAACEAAVGLALLILI).

This sequence belongs to the complex I subunit 4L family. In terms of assembly, core subunit of respiratory chain NADH dehydrogenase (Complex I) which is composed of 45 different subunits.

Its subcellular location is the mitochondrion inner membrane. It carries out the reaction a ubiquinone + NADH + 5 H(+)(in) = a ubiquinol + NAD(+) + 4 H(+)(out). Its function is as follows. Core subunit of the mitochondrial membrane respiratory chain NADH dehydrogenase (Complex I) which catalyzes electron transfer from NADH through the respiratory chain, using ubiquinone as an electron acceptor. Part of the enzyme membrane arm which is embedded in the lipid bilayer and involved in proton translocation. The protein is NADH-ubiquinone oxidoreductase chain 4L (MT-ND4L) of Cebus albifrons (White-fronted capuchin).